The primary structure comprises 697 residues: Probable potassium transporter 4 (697 aa).

The Cytoplasmic portion of the chain corresponds to 1-29 (MSSSHTVTVSMDVEAGQKNKDKKGISQDL). A helical membrane pass occupies residues 30-50 (ILAYKTLGVVFGGLVTSPLYV). Residues 51 to 66 (YPSMNLTNPTEEDYLG) are Extracellular-facing. N-linked (GlcNAc...) asparagine glycosylation occurs at Asn-55. The helical transmembrane segment at 67–87 (IYSIMFWTLTLIGVVKYICIA) threads the bilayer. Residues 88–152 (LNADDHGEGG…FIESSIIARR (65 aa)) lie on the Cytoplasmic side of the membrane. A helical transmembrane segment spans residues 153–173 (LLLLTAILGMCMLIGDGILTP). Over 174-189 (AISVLSAIDGLRGPFP) the chain is Extracellular. A helical membrane pass occupies residues 190–210 (SVSKPAVEGLSAAILVGLFLL). The Cytoplasmic segment spans residues 211-217 (QKYGTSK). Residues 218–238 (VSFMFSPIMAAWTFATPVIGV) form a helical membrane-spanning segment. The Extracellular portion of the chain corresponds to 239-271 (YSIWRYYPGIFKAMSPHYIVRFFMTNQTRGWQL). Asn-264 carries N-linked (GlcNAc...) asparagine glycosylation. A helical transmembrane segment spans residues 272–292 (LGGTVLCITGAEAMFADLGHF). Topologically, residues 293 to 300 (SKRSIQIA) are cytoplasmic. The chain crosses the membrane as a helical span at residues 301 to 321 (FMSSIYPSLVLTYAGQTAYLI). At 322 to 338 (NNVDDFSDGFYKFVPRP) the chain is on the extracellular side. Residues 339–359 (VYWPMFIIATLAAIVASQSLI) form a helical membrane-spanning segment. Topologically, residues 360–390 (SATFSVIKQSVVLDYFPRVKVVHTSKDKEGE) are cytoplasmic. The chain crosses the membrane as a helical span at residues 391 to 411 (VYSPETNYMLMLLCVGVILGF). Topologically, residues 412-422 (GDGKDIGNAFG) are extracellular. Residues 423 to 443 (VVVILVMLITTILLTLVMLII) traverse the membrane as a helical segment. Over 444 to 447 (WGTH) the chain is Cytoplasmic. The chain crosses the membrane as a helical span at residues 448 to 468 (VVLVALYLVPFLLLEATYVSA). Residues 469–475 (VCTKILR) are Extracellular-facing. Residues 476–496 (GGWVPFAVSVALAAVMFGWYY) traverse the membrane as a helical segment. Residues 497-697 (GRQRKTEYEA…RVEIGMLYKA (201 aa)) are Cytoplasmic-facing.

Belongs to the HAK/KUP transporter (TC 2.A.72.3) family.

It is found in the membrane. Functionally, high-affinity potassium transporter. The sequence is that of Probable potassium transporter 4 (HAK4) from Oryza sativa subsp. japonica (Rice).